The sequence spans 646 residues: MAPSADPGMVRMALLLLPPLWLLPLTGGSQRAEPMFTAVTNSVLPPDYDSNPTQLNYGVAVTDVDHDGDFEIVVAGYTGPNLVLKYNRAQNRLVNIAVDERSSPYYALRDRQGNAIGVTACDIDGDGREEIYFLNTNNAFSGVATYTDKLFKFRNNRWEDILSDDVNVARGVASLFAGRSVACVDRTGSGRYSIYIANYAYGDVGPDALIEMDPEASDLSRGILALRDVAAEAGVSKYTAGRGVSVGPILSSSASDIFCDNENGPNFLFHNQGNGTFVDTAASAGVDDPHQHGRGVALADFNRDGKVDIVYGNWNGPHRLYLQMSAHGKVRFRDIASPKFSTPSPVRTVIAADFDNDQELEVFFNNIAYRSSSANRLFRVIRREHGDPLIEELNPGDALEPEGRGTGGVVTDFDGDGMLDLILSHGESMAQPLSVFRGNQGFSNNWLRVVPRTRFGAFARGAKVVLYTKKSGAHLRIIDGGSGYLCEMEPVAHFGLGRDEASSVEVTWPDGKMVSRSVASEEMNSVLEILYPQDEDKLQNTAPLECGQGFSQQDNGHCMDTNECIQFPFVCPRDKPVCVNTYGSYRCRTNKRCNRGYEPNEDGTACVAQVAFLGGYSSAAFRLSEPLSQASYLSLGLGLCLQLYAL.

The N-terminal stretch at 1–28 is a signal peptide; the sequence is MAPSADPGMVRMALLLLPPLWLLPLTGG. One copy of the FG-GAP 1; atypical repeat lies at 47–89; that stretch reads DYDSNPTQLNYGVAVTDVDHDGDFEIVVAGYTGPNLVLKYNRA. An FG-GAP 2; atypical repeat occupies 106-148; it reads YALRDRQGNAIGVTACDIDGDGREEIYFLNTNNAFSGVATYTD. One copy of the FG-GAP 3; atypical repeat lies at 284–334; it reads AGVDDPHQHGRGVALADFNRDGKVDIVYGNWNGPHRLYLQMSAHGKVRFRD. An FG-GAP 4; atypical repeat occupies 396–438; the sequence is GDALEPEGRGTGGVVTDFDGDGMLDLILSHGESMAQPLSVFRG. The EGF-like domain maps to 560–606; sequence DTNECIQFPFVCPRDKPVCVNTYGSYRCRTNKRCNRGYEPNEDGTAC. 3 disulfide bridges follow: Cys564-Cys578, Cys571-Cys587, and Cys593-Cys606.

Its subcellular location is the secreted. It localises to the extracellular space. The protein localises to the extracellular matrix. The polypeptide is Cartilage acidic protein 1 (Crtac1) (Mus musculus (Mouse)).